Here is a 206-residue protein sequence, read N- to C-terminus: Large ribosomal subunit protein uL4 (206 aa).

The segment at 47-79 (GTKGQKNRSAVRGGGAKPWAQKGSGRARAGTSR) is disordered. The span at 69–79 (GSGRARAGTSR) shows a compositional bias: low complexity.

It belongs to the universal ribosomal protein uL4 family. In terms of assembly, part of the 50S ribosomal subunit.

One of the primary rRNA binding proteins, this protein initially binds near the 5'-end of the 23S rRNA. It is important during the early stages of 50S assembly. It makes multiple contacts with different domains of the 23S rRNA in the assembled 50S subunit and ribosome. Functionally, forms part of the polypeptide exit tunnel. This is Large ribosomal subunit protein uL4 from Hydrogenovibrio crunogenus (strain DSM 25203 / XCL-2) (Thiomicrospira crunogena).